Reading from the N-terminus, the 440-residue chain is Methylthioribose-1-phosphate isomerase (440 aa).

Residue Asp285 is the Proton donor of the active site.

Belongs to the eIF-2B alpha/beta/delta subunits family. MtnA subfamily.

It is found in the cytoplasm. It localises to the nucleus. The enzyme catalyses 5-(methylsulfanyl)-alpha-D-ribose 1-phosphate = 5-(methylsulfanyl)-D-ribulose 1-phosphate. Its pathway is amino-acid biosynthesis; L-methionine biosynthesis via salvage pathway; L-methionine from S-methyl-5-thio-alpha-D-ribose 1-phosphate: step 1/6. Catalyzes the interconversion of methylthioribose-1-phosphate (MTR-1-P) into methylthioribulose-1-phosphate (MTRu-1-P). This chain is Methylthioribose-1-phosphate isomerase (mri1), found in Botryotinia fuckeliana (strain B05.10) (Noble rot fungus).